Here is a 152-residue protein sequence, read N- to C-terminus: Actin-related protein 2/3 complex subunit 5-B (152 aa).

The segment at 21 to 44 (NKFVDDQLQEEPAEPQGPDEAEVD) is disordered. Acidic residues predominate over residues 27 to 43 (QLQEEPAEPQGPDEAEV).

Belongs to the ARPC5 family. Component of the Arp2/3 complex composed of actr2/arp2, actr3/arp3, arpc1 (arpc1a or arpc1b), arpc2, arpc3, arpc4 and arpc5.

It is found in the cytoplasm. It localises to the cytoskeleton. The protein localises to the cell projection. The protein resides in the nucleus. Functionally, component of the Arp2/3 complex, a multiprotein complex that mediates actin polymerization upon stimulation by nucleation-promoting factor (NPF). The Arp2/3 complex mediates the formation of branched actin networks in the cytoplasm, providing the force for cell motility. In addition to its role in the cytoplasmic cytoskeleton, the Arp2/3 complex also promotes actin polymerization in the nucleus, thereby regulating gene transcription and repair of damaged DNA. The Arp2/3 complex promotes homologous recombination (HR) repair in response to DNA damage by promoting nuclear actin polymerization, leading to drive motility of double-strand breaks (DSBs). This Xenopus laevis (African clawed frog) protein is Actin-related protein 2/3 complex subunit 5-B (arpc5-b).